Here is a 97-residue protein sequence, read N- to C-terminus: UPF0416 protein RC0826 (97 aa).

The first 33 residues, 1–33, serve as a signal peptide directing secretion; that stretch reads MRIFVKAAISTAAWRFYAHPTVAMGICVGTALA.

Belongs to the UPF0416 family.

The sequence is that of UPF0416 protein RC0826 from Rickettsia conorii (strain ATCC VR-613 / Malish 7).